Reading from the N-terminus, the 614-residue chain is Zinc metalloproteinase-disintegrin-like BmMP (614 aa).

Residues 1–20 form the signal peptide; it reads MIQALLVTICLAVFPYQGSS. A propeptide spanning residues 21–188 is cleaved from the precursor; it reads IILESGNVND…WESDEPIRNA (168 aa). Asparagine 187 is a glycosylation site (N-linked (GlcNAc...) asparagine). One can recognise a Peptidase M12B domain in the interval 205-401; it reads KYIEFYVAVD…DRPQCILNKP (197 aa). 17 disulfides stabilise this stretch: cysteine 316–cysteine 396, cysteine 356–cysteine 380, cysteine 359–cysteine 364, cysteine 412–cysteine 441, cysteine 423–cysteine 436, cysteine 425–cysteine 431, cysteine 435–cysteine 458, cysteine 449–cysteine 455, cysteine 454–cysteine 480, cysteine 467–cysteine 487, cysteine 474–cysteine 506, cysteine 499–cysteine 511, cysteine 518–cysteine 568, cysteine 533–cysteine 576, cysteine 546–cysteine 556, cysteine 563–cysteine 602, and cysteine 596–cysteine 607. Zn(2+) is bound at residue histidine 341. Residue glutamate 342 is part of the active site. Residues histidine 345 and histidine 351 each coordinate Zn(2+). A Disintegrin domain is found at 409 to 495; sequence PAICGNYFVE…ECPTDIFRRN (87 aa). The D/ECD-tripeptide signature appears at 473–475; the sequence is DCD.

The protein belongs to the venom metalloproteinase (M12B) family. P-III subfamily. P-IIIa sub-subfamily. As to quaternary structure, monomer. It depends on Zn(2+) as a cofactor. As to expression, expressed by the venom gland.

The protein resides in the secreted. Its function is as follows. Snake venom zinc metalloproteinase that inhibits platelet aggregation and degrades fibrinogen. This Bungarus multicinctus (Many-banded krait) protein is Zinc metalloproteinase-disintegrin-like BmMP.